Consider the following 357-residue polypeptide: Heme A synthase (357 aa).

The next 5 membrane-spanning stretches (helical) occupy residues 24–44 (LVRYWLYAVFVVLIAIVMVGG), 110–130 (MLARFVGFLVAVPLAFFWVTG), 140–160 (MLGLLALGGLQGAIGWWMVAS), 175–195 (IHLTTACIIITAVFYIARGLV), and 209–229 (FAGWIVFAVLVQIYLGGLVAG). His-272 serves as a coordination point for heme. Helical transmembrane passes span 274 to 294 (MFAYTVLVLTVLHSLQVWKQV), 303 to 323 (TIVLVGLVLIQAVIGIATLLM), and 325 to 345 (VPLHLGLTHQFFALIVLAFAV). His-333 contacts heme.

This sequence belongs to the COX15/CtaA family. Type 2 subfamily. As to quaternary structure, interacts with CtaB. Heme b is required as a cofactor.

It is found in the cell membrane. The enzyme catalyses Fe(II)-heme o + 2 A + H2O = Fe(II)-heme a + 2 AH2. It participates in porphyrin-containing compound metabolism; heme A biosynthesis; heme A from heme O: step 1/1. Catalyzes the conversion of heme O to heme A by two successive hydroxylations of the methyl group at C8. The first hydroxylation forms heme I, the second hydroxylation results in an unstable dihydroxymethyl group, which spontaneously dehydrates, resulting in the formyl group of heme A. In Brucella anthropi (strain ATCC 49188 / DSM 6882 / CCUG 24695 / JCM 21032 / LMG 3331 / NBRC 15819 / NCTC 12168 / Alc 37) (Ochrobactrum anthropi), this protein is Heme A synthase.